Reading from the N-terminus, the 677-residue chain is Transmembrane and coiled-coil domain-containing protein 3 (677 aa).

An N-terminal signal peptide occupies residues 1 to 22; that stretch reads MKVLGRSFFWVLFPVLPWAVQA. Residues 124-204 adopt a coiled-coil conformation; it reads DYKDVVNMKE…EEEIEEHAFD (81 aa). Residues asparagine 206 and asparagine 230 are each glycosylated (N-linked (GlcNAc...) asparagine). Transmembrane regions (helical) follow at residues 286 to 306, 317 to 337, 350 to 370, 416 to 436, 456 to 476, 498 to 518, 554 to 574, 578 to 598, 608 to 628, and 640 to 660; these read WLCT…GVLL, IVQV…LVGL, ISLQ…LLWG, VLLG…AVMP, ILVL…LCLV, EILI…TELL, FLAI…FVAY, VLVF…ALVL, YIKW…FVLG, and EVYL…PVLW.

Belongs to the monovalent cation:proton antiporter 2 (CPA2) transporter (TC 2.A.37) family. As to expression, expressed in the cornea, lens capsule and choroid-retinal pigment epithelium (at protein level).

The protein localises to the membrane. Functionally, probable Na(+)/H(+) antiporter. The protein is Transmembrane and coiled-coil domain-containing protein 3 (TMCO3) of Homo sapiens (Human).